A 362-amino-acid chain; its full sequence is Anthranilate phosphoribosyltransferase (362 aa).

Residues Gly96, 99–100 (GD), Thr104, 106–109 (NIST), 124–132 (KHGNRAASS), and Gly136 contribute to the 5-phospho-alpha-D-ribose 1-diphosphate site. Gly96 lines the anthranilate pocket. A Mg(2+)-binding site is contributed by Ser108. Asn127 lines the anthranilate pocket. Arg182 contributes to the anthranilate binding site. Asp240 and Glu241 together coordinate Mg(2+).

It belongs to the anthranilate phosphoribosyltransferase family. In terms of assembly, homodimer. Mg(2+) serves as cofactor.

It carries out the reaction N-(5-phospho-beta-D-ribosyl)anthranilate + diphosphate = 5-phospho-alpha-D-ribose 1-diphosphate + anthranilate. It participates in amino-acid biosynthesis; L-tryptophan biosynthesis; L-tryptophan from chorismate: step 2/5. Its function is as follows. Catalyzes the transfer of the phosphoribosyl group of 5-phosphorylribose-1-pyrophosphate (PRPP) to anthranilate to yield N-(5'-phosphoribosyl)-anthranilate (PRA). This Rhodococcus opacus (strain B4) protein is Anthranilate phosphoribosyltransferase.